The following is a 194-amino-acid chain: Phosphoheptose isomerase (194 aa).

Residues 37 to 194 form the SIS domain; sequence ISNSFKQGGK…LIEFEMAKQA (158 aa). 52–54 provides a ligand contact to substrate; it reads NGG. Positions 61 and 65 each coordinate Zn(2+). Residues Glu-65, 93–94, 119–121, Ser-124, and Gln-172 contribute to the substrate site; these read ND and STS. Positions 172 and 180 each coordinate Zn(2+).

Belongs to the SIS family. GmhA subfamily. As to quaternary structure, homotetramer. It depends on Zn(2+) as a cofactor.

The protein resides in the cytoplasm. It carries out the reaction 2 D-sedoheptulose 7-phosphate = D-glycero-alpha-D-manno-heptose 7-phosphate + D-glycero-beta-D-manno-heptose 7-phosphate. The protein operates within carbohydrate biosynthesis; D-glycero-D-manno-heptose 7-phosphate biosynthesis; D-glycero-alpha-D-manno-heptose 7-phosphate and D-glycero-beta-D-manno-heptose 7-phosphate from sedoheptulose 7-phosphate: step 1/1. Functionally, catalyzes the isomerization of sedoheptulose 7-phosphate in D-glycero-D-manno-heptose 7-phosphate. The polypeptide is Phosphoheptose isomerase (Haemophilus influenzae (strain PittEE)).